Here is a 226-residue protein sequence, read N- to C-terminus: Octanoyltransferase (226 aa).

Positions 37–220 (GTAGELIWLL…SFSKVFGPVE (184 aa)) constitute a BPL/LPL catalytic domain. Substrate contacts are provided by residues 76-83 (RGGQFTYH), 151-153 (AIG), and 164-166 (GIS). Residue C182 is the Acyl-thioester intermediate of the active site.

It belongs to the LipB family.

The protein resides in the cytoplasm. It catalyses the reaction octanoyl-[ACP] + L-lysyl-[protein] = N(6)-octanoyl-L-lysyl-[protein] + holo-[ACP] + H(+). The protein operates within protein modification; protein lipoylation via endogenous pathway; protein N(6)-(lipoyl)lysine from octanoyl-[acyl-carrier-protein]: step 1/2. Catalyzes the transfer of endogenously produced octanoic acid from octanoyl-acyl-carrier-protein onto the lipoyl domains of lipoate-dependent enzymes. Lipoyl-ACP can also act as a substrate although octanoyl-ACP is likely to be the physiological substrate. This chain is Octanoyltransferase, found in Caulobacter vibrioides (strain ATCC 19089 / CIP 103742 / CB 15) (Caulobacter crescentus).